Reading from the N-terminus, the 119-residue chain is Ig heavy chain V region X44 (119 aa).

The region spanning 1-117 is the Ig-like domain; it reads EVKLLESGGG…WGQGTLVTVS (117 aa).

This is Ig heavy chain V region X44 from Mus musculus (Mouse).